Consider the following 835-residue polypeptide: Phosphatidylinositol 4-kinase beta (835 aa).

3 disordered regions span residues 1–61 (MGDT…PLDV), 99–139 (SSAS…VRRR), and 267–341 (PSSQ…PVRL). Positions 19–59 (SPSTSTTSSLSLPSSPSSGPHPLTSSSPSTSEGLPTSSPPL) are enriched in low complexity. In terms of domain architecture, PIK helical spans 59 to 262 (LDVISEGLGE…GTKLRKLILS (204 aa)). 2 stretches are compositionally biased toward basic and acidic residues: residues 125–134 (ISEEEVEPIK) and 267–276 (PSSQRIRREV). A compositionally biased stretch (pro residues) spans 277 to 288 (PQPPPPYPPPLH). Residues 311 to 332 (DATVSISLSSNLKRTASNPKVE) are compositionally biased toward polar residues. The 267-residue stretch at 554-820 (EPWQEKVRRI…MVDGSMRSIT (267 aa)) folds into the PI3K/PI4K catalytic domain. Positions 560–566 (VRRIREG) are G-loop. Residues 687-695 (QVKDRHNGN) are catalytic loop. An activation loop region spans residues 706 to 730 (HIDFGFILSSSPRNLGFETSAFKLT).

Belongs to the PI3/PI4-kinase family. Type III PI4K subfamily. It depends on Mg(2+) as a cofactor. Requires Mn(2+) as cofactor. As to expression, expressed in the inner ear otic vesicles.

Its subcellular location is the endomembrane system. The protein localises to the mitochondrion outer membrane. It localises to the rough endoplasmic reticulum membrane. It catalyses the reaction a 1,2-diacyl-sn-glycero-3-phospho-(1D-myo-inositol) + ATP = a 1,2-diacyl-sn-glycero-3-phospho-(1D-myo-inositol 4-phosphate) + ADP + H(+). In terms of biological role, phosphorylates phosphatidylinositol (PI) in the first committed step in the production of the second messenger inositol-1,4,5,-trisphosphate (PIP). May play an important role the in inner ear development. This is Phosphatidylinositol 4-kinase beta (pi4kb) from Danio rerio (Zebrafish).